We begin with the raw amino-acid sequence, 172 residues long: Shikimate kinase (172 aa).

Residue 11 to 16 (ASGKTE) participates in ATP binding. Mg(2+) is bound at residue Thr-15. Substrate is bound by residues Asp-33, Arg-57, and Gly-80. ATP is bound at residue Arg-120. Residue Arg-142 coordinates substrate.

This sequence belongs to the shikimate kinase family. In terms of assembly, monomer. Mg(2+) serves as cofactor.

Its subcellular location is the cytoplasm. The enzyme catalyses shikimate + ATP = 3-phosphoshikimate + ADP + H(+). It functions in the pathway metabolic intermediate biosynthesis; chorismate biosynthesis; chorismate from D-erythrose 4-phosphate and phosphoenolpyruvate: step 5/7. Catalyzes the specific phosphorylation of the 3-hydroxyl group of shikimic acid using ATP as a cosubstrate. This Flavobacterium psychrophilum (strain ATCC 49511 / DSM 21280 / CIP 103535 / JIP02/86) protein is Shikimate kinase.